The primary structure comprises 229 residues: MVEDSKARIGGPNNSSVTKKQEPRLYVVLCEASLETYTSNDHRTSLLNCDDHQGILRKMGRDIAEARPDITHQCLLTLLDSPINKAGLLQVYILTKKNVLIEVNPSVRIPRTFKRFSGLMVQLLHKLSIRSMESSNTHLLRVVKNPVTKYLPADCRKVTLSFDAEVMRPQEYLGDKQSVCVFVGAMARGHDSFADEYVDDKIAISNYPLSASVACSKFCHGAEDAWAII.

S-adenosyl-L-methionine is bound by residues Leu160, Gly184, 189-191 (GHD), and 204-209 (ISNYPL).

Belongs to the class IV-like SAM-binding methyltransferase superfamily. RNA methyltransferase NEP1 family. In terms of assembly, homodimer.

The protein resides in the nucleus. It localises to the nucleolus. The enzyme catalyses a pseudouridine in rRNA + S-adenosyl-L-methionine = an N(1)-methylpseudouridine in rRNA + S-adenosyl-L-homocysteine + H(+). Functionally, S-adenosyl-L-methionine-dependent pseudouridine N(1)-methyltransferase that methylates the pseudouridine corresponding to position 1189 (Psi1189) in S.cerevisiae 18S rRNA. Involved the biosynthesis of the hypermodified N1-methyl-N3-(3-amino-3-carboxypropyl) pseudouridine (m1acp3-Psi) conserved in eukaryotic 18S rRNA. Also has an essential role in 40S ribosomal subunit biogenesis independent on its methyltransferase activity, facilitating the incorporation of ribosomal protein S19 during the formation of pre-ribosomes. In Candida glabrata (strain ATCC 2001 / BCRC 20586 / JCM 3761 / NBRC 0622 / NRRL Y-65 / CBS 138) (Yeast), this protein is Ribosomal RNA small subunit methyltransferase NEP1 (NEP1).